Reading from the N-terminus, the 234-residue chain is Glutamine synthetase (234 aa).

In terms of domain architecture, GS catalytic spans Lys-1 to Leu-234. The tract at residues Gly-126–Arg-157 is disordered.

Belongs to the glutamine synthetase family. Homooctamer.

Its subcellular location is the cytoplasm. It catalyses the reaction L-glutamate + NH4(+) + ATP = L-glutamine + ADP + phosphate + H(+). The sequence is that of Glutamine synthetase from Dunaliella salina (Green alga).